Reading from the N-terminus, the 73-residue chain is Translational regulator CsrA (73 aa).

The protein belongs to the CsrA/RsmA family. In terms of assembly, homodimer; the beta-strands of each monomer intercalate to form a hydrophobic core, while the alpha-helices form wings that extend away from the core.

It localises to the cytoplasm. Its function is as follows. A translational regulator that binds mRNA to regulate translation initiation and/or mRNA stability. Usually binds in the 5'-UTR at or near the Shine-Dalgarno sequence preventing ribosome-binding, thus repressing translation. Its main target seems to be the major flagellin gene, while its function is anatagonized by FliW. The polypeptide is Translational regulator CsrA (Clostridium kluyveri (strain NBRC 12016)).